A 473-amino-acid chain; its full sequence is Venom prothrombin activator vestarin-D1 (473 aa).

Residues 1-20 (MAPQLLLCLIQTFLWSLPEA) form the signal peptide. A propeptide spanning residues 21 to 40 (ESNVFLKSNVANRFLQRTKR) is cleaved from the precursor. The Gla domain maps to 41–86 (ANSGFEEIYPANFERECVEERCSKEEAREVFEDDEKTEAFWTVYVD). 11 positions are modified to 4-carboxyglutamate: Glu46, Glu47, Glu54, Glu56, Glu59, Glu60, Glu65, Glu66, Glu69, Glu72, and Glu75. Cys57 and Cys62 are joined by a disulfide. In terms of domain architecture, EGF-like 1; calcium-binding spans 86–122 (DGDQCLSNPCHYGGTCKDGIGSYTCTCLAGYEGKNCE). Cystine bridges form between Cys90–Cys101, Cys95–Cys110, Cys112–Cys121, Cys129–Cys140, Cys136–Cys149, Cys151–Cys164, Cys172–Cys335, Cys235–Cys240, Cys383–Cys397, and Cys408–Cys436. The O-linked (Hex...) serine glycan is linked to Ser92. The 36-residue stretch at 129 to 164 (CRVDNGNCWHFCKPVQNDTQCSCAEGYRLGDNGFSC) folds into the EGF-like 2 domain. Residues 182 to 228 (REASLPDFQTDFSDDYDAIDENNLIETVQSQSATLLKKSDNPNPDIR) constitute a propeptide, activation peptide. In terms of domain architecture, Peptidase S1 spans 229–460 (IVNGLDCKLG…FLPWIKTIMR (232 aa)). Catalysis depends on His270, which acts as the Charge relay system. Asn273 is a glycosylation site (N-linked (GlcNAc...) asparagine). Asp315 acts as the Charge relay system in catalysis. The Charge relay system role is filled by Ser412.

Belongs to the peptidase S1 family. Snake venom subfamily. As to quaternary structure, heterodimer of a light chain and a heavy chain; disulfide-linked. In terms of processing, the vitamin K-dependent, enzymatic carboxylation of some glutamate residues allows the modified protein to bind calcium. In terms of tissue distribution, expressed by the venom gland.

The protein resides in the secreted. The catalysed reaction is Selective cleavage of Arg-|-Thr and then Arg-|-Ile bonds in prothrombin to form thrombin.. In terms of biological role, snake prothrombin activator that attacks the hemostatic system of prey. This protein is functionally similar to blood coagulation factor Xa. In Demansia vestigiata (Lesser black whip snake), this protein is Venom prothrombin activator vestarin-D1.